A 363-amino-acid polypeptide reads, in one-letter code: 43 kDa protein (363 aa).

The sequence is that of 43 kDa protein (P43) from Lepidoptera (butterflies and moths).